Reading from the N-terminus, the 526-residue chain is GMP synthase [glutamine-hydrolyzing] (526 aa).

The region spanning 8-208 is the Glutamine amidotransferase type-1 domain; it reads CILIIDFGSQ…AVDICRCEVT (201 aa). The active-site Nucleophile is C85. Residues H182 and E184 contribute to the active site. In terms of domain architecture, GMPS ATP-PPase spans 209–401; the sequence is WKPVYIVKNI…LGLPLNVVNQ (193 aa). 236-242 is a binding site for ATP; the sequence is SGGIDSL.

In terms of assembly, homodimer.

It carries out the reaction XMP + L-glutamine + ATP + H2O = GMP + L-glutamate + AMP + diphosphate + 2 H(+). It participates in purine metabolism; GMP biosynthesis; GMP from XMP (L-Gln route): step 1/1. Catalyzes the synthesis of GMP from XMP. This Blochmanniella floridana protein is GMP synthase [glutamine-hydrolyzing].